Reading from the N-terminus, the 292-residue chain is MTNLLENTNLLTAIITPFDKNNRIDFQVYRRLIDSQISDGVKGFVISGTTGEAPTLSHDEKIELFKRTVDFVSGRAKVIVGTGSNNTKETIEFTKEAGRINGIDAALIVTPYYNKPDQAGMIAHFSTIADESPLPIVIYNIPGRSISALTVESLLKLADHPNIIAVKQCNSDYDMSELIEHAPKDFLVYTGEDGQSFLNYALGGAGTISVASHFYAKEFADMFSAIDNGDFKKAAGDFRFINPRVKALFSYPSPAPVKAVFKRSGIDVGIPRLPILPLDKAQTDGIMQVLKL.

Thr-50 contacts pyruvate. Tyr-139 (proton donor/acceptor) is an active-site residue. The active-site Schiff-base intermediate with substrate is the Lys-167. Ile-208 lines the pyruvate pocket.

It belongs to the DapA family. Homotetramer; dimer of dimers.

It is found in the cytoplasm. It carries out the reaction L-aspartate 4-semialdehyde + pyruvate = (2S,4S)-4-hydroxy-2,3,4,5-tetrahydrodipicolinate + H2O + H(+). It functions in the pathway amino-acid biosynthesis; L-lysine biosynthesis via DAP pathway; (S)-tetrahydrodipicolinate from L-aspartate: step 3/4. Catalyzes the condensation of (S)-aspartate-beta-semialdehyde [(S)-ASA] and pyruvate to 4-hydroxy-tetrahydrodipicolinate (HTPA). This Oenococcus oeni (strain ATCC BAA-331 / PSU-1) protein is 4-hydroxy-tetrahydrodipicolinate synthase.